Here is a 398-residue protein sequence, read N- to C-terminus: Acetate kinase (398 aa).

Residue Asn7 participates in Mg(2+) binding. Lys14 provides a ligand contact to ATP. Arg91 provides a ligand contact to substrate. Asp148 (proton donor/acceptor) is an active-site residue. Residues His208–Gly212, Asp282–Arg284, and Gly330–Asn334 each bind ATP. Glu383 is a Mg(2+) binding site.

Belongs to the acetokinase family. In terms of assembly, homodimer. Mg(2+) serves as cofactor. Mn(2+) is required as a cofactor.

Its subcellular location is the cytoplasm. The enzyme catalyses acetate + ATP = acetyl phosphate + ADP. It functions in the pathway metabolic intermediate biosynthesis; acetyl-CoA biosynthesis; acetyl-CoA from acetate: step 1/2. Functionally, catalyzes the formation of acetyl phosphate from acetate and ATP. Can also catalyze the reverse reaction. The sequence is that of Acetate kinase from Carboxydothermus hydrogenoformans (strain ATCC BAA-161 / DSM 6008 / Z-2901).